Here is a 497-residue protein sequence, read N- to C-terminus: Reticulophagy regulator 1 (497 aa).

Residues 1–51 (MASPAPPEHAEEGCPAPAAEEQAPPSPPPPQASPAERQQQEEEAQEAGAAE) form a disordered region. Topologically, residues 1 to 59 (MASPAPPEHAEEGCPAPAAEEQAPPSPPPPQASPAERQQQEEEAQEAGAAEGAGLQVEE) are cytoplasmic. Low complexity predominate over residues 13 to 23 (GCPAPAAEEQA). The chain crosses the membrane as a helical span at residues 60 to 80 (AAGRAAAAVTWLLGEPVLWLG). Over 81-95 (CRADELLSWKRPLRS) the chain is Lumenal. The interval 84-233 (DELLSWKRPL…LLCAFLCPLF (150 aa)) is reticulon homology domain. Residues 96-116 (LLGFVAANLLFWFLALTPWRV) traverse the membrane as a helical segment. The Cytoplasmic segment spans residues 117–118 (YH). The helical transmembrane segment at 119-139 (LISVMILGRVIMQIIKDMVLS) threads the bilayer. The Lumenal segment spans residues 140–208 (RTRGAQLWRS…LVCSVCTFFT (69 aa)). Ser149 is subject to Phosphoserine. The residue at position 151 (Ser151) is a Phosphoserine; by CAMK2B. Ser153 carries the phosphoserine modification. The chain crosses the membrane as a helical span at residues 209-229 (ILGSYIPGVILSYLLLLCAFL). The Cytoplasmic segment spans residues 230–497 (CPLFKCNDIG…GFLSNLLGGH (268 aa)). A compositionally biased stretch (polar residues) spans 319–330 (FNLSEGYTPQTD). 4 disordered regions span residues 319 to 365 (FNLS…EDEL), 377 to 396 (KEQL…AAGL), 436 to 455 (LSQA…GDDF), and 468 to 497 (SELG…LGGH). Composition is skewed to basic and acidic residues over residues 334–348 (DLDR…RDLS) and 377–388 (KEQLDSGHRPSK). The span at 443 to 455 (PEEDTDTEEGDDF) shows a compositional bias: acidic residues. The short motif at 453-458 (DDFELL) is the LIR motif element. The segment covering 471-490 (GLTQDQEAEAQQNKKSSGFL) has biased composition (polar residues).

Belongs to the RETREG family. As to quaternary structure, homooligomer; oligomerization is enhanced following endoplasmic reticulum stress and is mediated by the reticulon homology domain. Interacts with ATG8 family modifier proteins MAP1LC3A, MAP1LC3B, MAP1LC3C, GABARAP, GABARAPL1 and GABARAPL2. Shows higher affinity for GABARAPL1 than for MAP1LC3A or MAP1LC3B. In terms of processing, phosphorylation at Ser-151 by CAMK2B enhances oligomerization and membrane scission and reticulophagy activity. Overexpressed in esophageal squamous cell carcinoma.

Its subcellular location is the golgi apparatus. The protein localises to the cis-Golgi network membrane. It localises to the endoplasmic reticulum membrane. Its function is as follows. Endoplasmic reticulum (ER)-anchored autophagy regulator which mediates ER delivery into lysosomes through sequestration into autophagosomes. Promotes membrane remodeling and ER scission via its membrane bending capacity and targets the fragments into autophagosomes via interaction with ATG8 family proteins. Active under basal conditions. Required for collagen quality control in a LIR motif-dependent manner. Required for long-term survival of nociceptive and autonomic ganglion neurons. (Microbial infection) During SARS-CoV-2 infection, RETREG1-mediated reticulophagy is promoted by SARS-CoV-2 ORF3A protein. This induces endoplasmic reticulum stress and inflammatory responses and facilitates viral infection. The polypeptide is Reticulophagy regulator 1 (Homo sapiens (Human)).